We begin with the raw amino-acid sequence, 330 residues long: (4-{4-[2-(gamma-L-glutamylamino)ethyl]phenoxymethyl}furan-2-yl)methanamine synthase (330 aa).

The protein belongs to the MfnF family.

It carries out the reaction gamma-L-glutamyltyramine + [5-(aminomethyl)furan-3-yl]methyl diphosphate = (4-{4-[2-(gamma-L-glutamylamino)ethyl]phenoxymethyl}furan-2-yl)methanamine + diphosphate. The protein operates within cofactor biosynthesis; methanofuran biosynthesis. Its function is as follows. Catalyzes the condensation between 5-(aminomethyl)-3-furanmethanol diphosphate (F1-PP) and gamma-glutamyltyramine to produce APMF-Glu. This Methanocaldococcus jannaschii (strain ATCC 43067 / DSM 2661 / JAL-1 / JCM 10045 / NBRC 100440) (Methanococcus jannaschii) protein is (4-{4-[2-(gamma-L-glutamylamino)ethyl]phenoxymethyl}furan-2-yl)methanamine synthase.